The following is a 200-amino-acid chain: Protein C2-DOMAIN ABA-RELATED 5 (200 aa).

The 121-residue stretch at 22-142 folds into the C2 domain; the sequence is VAGEKHKDRR…LKMHLHDLPS (121 aa). Residues Arg57, Asp58, Asp63, Asp109, Tyr110, Asp111, and Asp117 each coordinate Ca(2+).

The protein belongs to the plant CAR protein family. In terms of assembly, binds to PYR/PYL/RCAR abscisic acid intracellular receptors in an ABA-independent manner, both at the plasma membrane and in the nucleus.

Its subcellular location is the cell membrane. It is found in the nucleus. Stimulates the GTPase/ATPase activities of Obg-like ATPases. Mediates the transient calcium-dependent interaction of PYR/PYL/RCAR abscisic acid (ABA) receptors with the plasma membrane and thus regulates ABA sensitivity. The chain is Protein C2-DOMAIN ABA-RELATED 5 from Arabidopsis thaliana (Mouse-ear cress).